The chain runs to 224 residues: Respiratory supercomplex factor 2, mitochondrial (224 aa).

Topologically, residues 1-13 (MKILTQDEIEAHR) are mitochondrial intermembrane. A helical transmembrane segment spans residues 14–38 (SHTLKGGIEGALAGFAISAIIFKVL). At 39–47 (PRRYPKFKP) the chain is on the mitochondrial matrix side. A helical membrane pass occupies residues 48–75 (STLTWSIKTALWITPPTVLTAICAEEAS). The Mitochondrial intermembrane segment spans residues 76–103 (NNFDATMYGSGSSSEDALDEHRRWKSLS). The 92-residue stretch at 89 to 180 (SEDALDEHRR…YENKLHPNKQ (92 aa)) folds into the HIG1 domain. A helical transmembrane segment spans residues 104 to 133 (TKDKFVEGLSNNKYKIITGAWAASLYGSWV). The Mitochondrial matrix portion of the chain corresponds to 134–142 (IVNKDPIMT). Residues 143–173 (KAQKIVQARMYAQFITVGLLLASVGLSMYEN) traverse the membrane as a helical segment. Residues 174–184 (KLHPNKQKVNE) are Mitochondrial intermembrane-facing. Residues 185–204 (MRRWENALRVAEEEERLEKE) traverse the membrane as a helical segment. At 205 to 224 (GRRTGYVSNEERINSKIFKS) the chain is on the mitochondrial matrix side.

Associates with a subpopulation of the cytochrome bc1-cytochrome c oxidase supercomplexes. Associates in substoichiometric amounts with complex IV. Interacts with COX3.

The protein resides in the mitochondrion membrane. Functionally, assembly factor that plays a role in the assembly of the respiratory chain supercomplexes (SCs) composed of ubiquinol-cytochrome c oxidoreductase (cytochrome b-c1 complex, complex III, CIII) and cytochrome c oxidase (complex IV, CIV). May be required for late-stage assembly of the COX12 and COX13 subunits. Required for the generation and maintenance of a normal proton motive force (PMF) across the inner mitochondrial membrane (IMM) by preventing proton leakage through an inactive population of CIV that accumulates when RCF1 and/or RCF2 proteins are absent. The chain is Respiratory supercomplex factor 2, mitochondrial (RCF2) from Saccharomyces cerevisiae (strain ATCC 204508 / S288c) (Baker's yeast).